We begin with the raw amino-acid sequence, 58 residues long: uncharacterized protein (58 aa).

Residues 24–44 (LSVYLGLATTIVCIVLFFTML) form a helical membrane-spanning segment.

The protein localises to the membrane. This is an uncharacterized protein from Haemophilus influenzae (strain ATCC 51907 / DSM 11121 / KW20 / Rd).